A 293-amino-acid polypeptide reads, in one-letter code: Diaminopimelate epimerase (293 aa).

The substrate site is built by asparagine 11 and asparagine 78. Cysteine 87 serves as the catalytic Proton donor. Residues 88–89 (GN), asparagine 166, asparagine 202, and 220–221 (ER) each bind substrate. The active-site Proton acceptor is the cysteine 229. 230–231 (GT) contacts substrate.

This sequence belongs to the diaminopimelate epimerase family. As to quaternary structure, homodimer.

The protein localises to the cytoplasm. The enzyme catalyses (2S,6S)-2,6-diaminopimelate = meso-2,6-diaminopimelate. The protein operates within amino-acid biosynthesis; L-lysine biosynthesis via DAP pathway; DL-2,6-diaminopimelate from LL-2,6-diaminopimelate: step 1/1. In terms of biological role, catalyzes the stereoinversion of LL-2,6-diaminopimelate (L,L-DAP) to meso-diaminopimelate (meso-DAP), a precursor of L-lysine and an essential component of the bacterial peptidoglycan. The polypeptide is Diaminopimelate epimerase (Mycobacterium sp. (strain JLS)).